Reading from the N-terminus, the 577-residue chain is Urease subunit alpha (577 aa).

The 442-residue stretch at 136–577 folds into the Urease domain; that stretch reads GAIDCHVHLI…LPMAQRYFLF (442 aa). 3 residues coordinate Ni(2+): histidine 141, histidine 143, and lysine 224. At lysine 224 the chain carries N6-carboxylysine. Histidine 226 provides a ligand contact to substrate. Ni(2+) is bound by residues histidine 253 and histidine 279. Histidine 327 serves as the catalytic Proton donor. Residue aspartate 367 coordinates Ni(2+).

It belongs to the metallo-dependent hydrolases superfamily. Urease alpha subunit family. In terms of assembly, heterotrimer of UreA (gamma), UreB (beta) and UreC (alpha) subunits. Three heterotrimers associate to form the active enzyme. Ni cation is required as a cofactor. Post-translationally, carboxylation allows a single lysine to coordinate two nickel ions.

The protein resides in the cytoplasm. It catalyses the reaction urea + 2 H2O + H(+) = hydrogencarbonate + 2 NH4(+). Its pathway is nitrogen metabolism; urea degradation; CO(2) and NH(3) from urea (urease route): step 1/1. This chain is Urease subunit alpha, found in Mycobacterium ulcerans (strain Agy99).